Here is a 142-residue protein sequence, read N- to C-terminus: Large ribosomal subunit protein uL13 (142 aa).

The protein belongs to the universal ribosomal protein uL13 family. As to quaternary structure, part of the 50S ribosomal subunit.

Its function is as follows. This protein is one of the early assembly proteins of the 50S ribosomal subunit, although it is not seen to bind rRNA by itself. It is important during the early stages of 50S assembly. The chain is Large ribosomal subunit protein uL13 from Francisella philomiragia subsp. philomiragia (strain ATCC 25017 / CCUG 19701 / FSC 153 / O#319-036).